The sequence spans 502 residues: Peroxisomal catalase (502 aa).

Catalysis depends on residues His64 and Asn137. Tyr347 contributes to the heme binding site. The Microbody targeting signal signature appears at Ala500–Met502.

Belongs to the catalase family. Requires heme as cofactor.

It localises to the peroxisome matrix. The enzyme catalyses 2 H2O2 = O2 + 2 H2O. In terms of biological role, catalyzes the degradation of hydrogen peroxide (H(2)O(2)) generated by peroxisomal oxidases to water and oxygen, thereby protecting cells from the toxic effects of hydrogen peroxide. The protein is Peroxisomal catalase of Toxoplasma gondii.